A 117-amino-acid chain; its full sequence is Small ribosomal subunit protein bS6 (117 aa).

Residues 96-117 (HAEGPSVQMQKRDERDNRRERR) are disordered. The segment covering 105–117 (QKRDERDNRRERR) has biased composition (basic and acidic residues).

This sequence belongs to the bacterial ribosomal protein bS6 family.

In terms of biological role, binds together with bS18 to 16S ribosomal RNA. In Ruegeria sp. (strain TM1040) (Silicibacter sp.), this protein is Small ribosomal subunit protein bS6.